A 292-amino-acid chain; its full sequence is mRNA export protein 33 (292 aa).

A disordered region spans residues 1–76; the sequence is MPPKKAAKGK…RKRREEEKRA (76 aa). 2 stretches are compositionally biased toward basic and acidic residues: residues 9–26 and 58–76; these read GKGDPGKAAKKDPTKKAA and KDAKRQEALRKRREEEKRA. The C3H1-type zinc-finger motif lies at 134 to 172; sequence INTDIVCKFFLEACETGKYGWLWQCPNGNMTCIYKHALP.

It is found in the cytoplasm. Functions as a component of the nuclear pore complex (NPC). NPC components, collectively referred to as nucleoporins (NUPs), can play the role of both NPC structural components and of docking or interaction partners for transiently associated nuclear transport factors. Active directional transport is assured by both, a Phe-Gly (FG) repeat affinity gradient for these transport factors across the NPC and a transport cofactor concentration gradient across the nuclear envelope. Involved in the export of mRNA from the nucleus to the cytoplasm. May play a role in mitotic spindle formation and/or function. This is mRNA export protein 33 (mep33) from Schizosaccharomyces pombe (strain 972 / ATCC 24843) (Fission yeast).